The following is a 569-amino-acid chain: Endonuclease/exonuclease/phosphatase family domain-containing protein 1 (569 aa).

Residue Gly-2 is the site of N-myristoyl glycine attachment. Phosphoserine is present on residues Ser-16 and Ser-25. The HhH domain maps to 38–67 (ERLNINTATEEELMTLPGVTRAVARSIVEY). Phosphoserine occurs at positions 106, 110, 160, and 173. The disordered stretch occupies residues 200–224 (SRPPSTHTNGGLTFTAKPHPSPTSL). Polar residues predominate over residues 202 to 211 (PPSTHTNGGL). The residue at position 265 (Thr-265) is a Phosphothreonine. Residues 549-569 (VPRNGNGVTLEPSEANIKHER) are disordered.

The sequence is that of Endonuclease/exonuclease/phosphatase family domain-containing protein 1 (Eepd1) from Mus musculus (Mouse).